A 254-amino-acid polypeptide reads, in one-letter code: Ribonuclease PH (254 aa).

Residues Arg-86 and 124–126 (GTR) each bind phosphate.

Belongs to the RNase PH family. In terms of assembly, homohexameric ring arranged as a trimer of dimers.

The catalysed reaction is tRNA(n+1) + phosphate = tRNA(n) + a ribonucleoside 5'-diphosphate. Phosphorolytic 3'-5' exoribonuclease that plays an important role in tRNA 3'-end maturation. Removes nucleotide residues following the 3'-CCA terminus of tRNAs; can also add nucleotides to the ends of RNA molecules by using nucleoside diphosphates as substrates, but this may not be physiologically important. Probably plays a role in initiation of 16S rRNA degradation (leading to ribosome degradation) during starvation. This is Ribonuclease PH from Carboxydothermus hydrogenoformans (strain ATCC BAA-161 / DSM 6008 / Z-2901).